A 287-amino-acid polypeptide reads, in one-letter code: Heterodimeric geranylgeranyl pyrophosphate synthase small subunit 2, chloroplastic (287 aa).

Mg(2+)-binding residues include E103 and D109. Dimethylallyl diphosphate is bound by residues K204, Q241, and K250.

Belongs to the FPP/GGPP synthase family. In terms of assembly, part of a heterodimeric geranyl(geranyl)diphosphate synthase. Mg(2+) is required as a cofactor. As to expression, mainly expressed in trichomes, and, to a lower extent, in roots, leaves, flowers and stems.

The protein localises to the plastid. It is found in the chloroplast thylakoid membrane. Functionally, heterodimeric geranyl(geranyl)-diphosphate (GPP) synthase small subunit. The small subunit alone is inactive in vitro while the large subunit GGPPS1 catalyzes mainly the production of geranygeranyl-diphosphate in vitro. Upon association of the two subunits, the product profile changes and the production of gerany-diphosphate is strongly increased. The polypeptide is Heterodimeric geranylgeranyl pyrophosphate synthase small subunit 2, chloroplastic (Cannabis sativa (Hemp)).